Here is a 571-residue protein sequence, read N- to C-terminus: Phosphatidylinositol-3,5-bisphosphate 3-phosphatase MTMR2 (571 aa).

A GRAM domain is found at methionine 1–glycine 67. The 376-residue stretch at glycine 133–tyrosine 508 folds into the Myotubularin phosphatase domain. Residues asparagine 258, asparagine 283, and isoleucine 284 each contribute to the a 1,2-diacyl-sn-glycero-3-phospho-(1D-myo-inositol-3,5-bisphosphate) site. The a 1,2-diacyl-sn-glycero-3-phospho-(1D-myo-inositol-3-phosphate) site is built by asparagine 258, asparagine 283, and isoleucine 284. Cysteine 345 serves as the catalytic Phosphocysteine intermediate. The a 1,2-diacyl-sn-glycero-3-phospho-(1D-myo-inositol-3,5-bisphosphate) site is built by serine 346, aspartate 347, glycine 348, tryptophan 349, aspartate 350, arginine 351, arginine 387, and arginine 391. A 1,2-diacyl-sn-glycero-3-phospho-(1D-myo-inositol-3-phosphate)-binding residues include serine 346, aspartate 347, glycine 348, tryptophan 349, aspartate 350, and arginine 351. An a 1,2-diacyl-sn-glycero-3-phospho-(1D-myo-inositol-3-phosphate)-binding site is contributed by arginine 391. Positions valine 521–serine 553 form a coiled coil. The disordered stretch occupies residues arginine 544–valine 571.

The protein belongs to the protein-tyrosine phosphatase family. Non-receptor class myotubularin subfamily. As to quaternary structure, homooligomer and heterooligomer.

Its subcellular location is the cytoplasm. It localises to the early endosome membrane. The catalysed reaction is a 1,2-diacyl-sn-glycero-3-phospho-(1D-myo-inositol-3,5-bisphosphate) + H2O = a 1,2-diacyl-sn-glycero-3-phospho-(1D-myo-inositol-5-phosphate) + phosphate. It catalyses the reaction a 1,2-diacyl-sn-glycero-3-phospho-(1D-myo-inositol-3-phosphate) + H2O = a 1,2-diacyl-sn-glycero-3-phospho-(1D-myo-inositol) + phosphate. The enzyme catalyses 1,2-dioctanoyl-sn-glycero-3-phospho-(1-D-myo-inositol-3-phosphate) + H2O = 1,2-dioctanoyl-sn-glycero-3-phospho-(1D-myo-inositol) + phosphate. It carries out the reaction 1,2-dioctanoyl-sn-glycero-3-phospho-(1D-myo-inositol-3,5-bisphosphate) + H2O = 1,2-dioctanoyl-sn-glycero-3-phospho-(1D-myo-inositol-5-phosphate) + phosphate. Its function is as follows. Lipid phosphatase that specifically dephosphorylates the D-3 position of phosphatidylinositol 3-phosphate and phosphatidylinositol 3,5-bisphosphate, generating phosphatidylinositol and phosphatidylinositol 5-phosphate. Regulates the level of these phosphoinositides critical for various biological processes including autophagy initiation and autophagosome maturation. The polypeptide is Phosphatidylinositol-3,5-bisphosphate 3-phosphatase MTMR2 (Gallus gallus (Chicken)).